Consider the following 187-residue polypeptide: dCTP deaminase (187 aa).

Residues 110–115 (KSTYAR), 134–136 (TLE), Gln155, Tyr169, and Gln179 each bind dCTP. Glu136 (proton donor/acceptor) is an active-site residue.

This sequence belongs to the dCTP deaminase family. Homotrimer.

The catalysed reaction is dCTP + H2O + H(+) = dUTP + NH4(+). It functions in the pathway pyrimidine metabolism; dUMP biosynthesis; dUMP from dCTP (dUTP route): step 1/2. Functionally, catalyzes the deamination of dCTP to dUTP. This is dCTP deaminase from Bordetella pertussis (strain Tohama I / ATCC BAA-589 / NCTC 13251).